The sequence spans 342 residues: MDLIYIPEDLSSCPKFGNKSCPPTNRSFRVRLIMYLLMTGAMVITIFGNLVIIISISHFKQLHSPTNFLILSMATTDFLLGFVIMPYSMVRSVESCWYFGDSFCKFHASFDMMLSLTSIFHLCSIAIDRFYAVCAPLHYTTTMTASMIKRLLFFCWAAPALFSFGLVLSEANVSGMQSYEILIACFNFCALTFNKFWGTILFTTCFFTPGSIMVGIYGKIFIVSRRHARALGNMPENTKGAGRNLSKKKDRKAAKTLGIVMGVFLACWLPCFLAVLIDPYLDYSTPIIVLDLLVWLGYFNSTCNPLIHGFFYPWFRKALEHIVSGKIFRSNSDTANLFPEAH.

Residues 1 to 35 (MDLIYIPEDLSSCPKFGNKSCPPTNRSFRVRLIMY) lie on the Extracellular side of the membrane. Residues Asn18 and Asn25 are each glycosylated (N-linked (GlcNAc...) asparagine). Disulfide bonds link Cys21/Cys185 and Cys104/Cys189. Residues 36–56 (LLMTGAMVITIFGNLVIIISI) traverse the membrane as a helical segment. The Cytoplasmic portion of the chain corresponds to 57 to 68 (SHFKQLHSPTNF). Residues 69–89 (LILSMATTDFLLGFVIMPYSM) traverse the membrane as a helical segment. Over 90–150 (VRSVESCWYF…TTMTASMIKR (61 aa)) the chain is Extracellular. Residues 151-168 (LLFFCWAAPALFSFGLVL) form a helical membrane-spanning segment. Over 169–172 (SEAN) the chain is Cytoplasmic. Positions 173–186 (VSGMQSYEILIACF) are extracellular Loop 2 (ECL2). A helical membrane pass occupies residues 173–193 (VSGMQSYEILIACFNFCALTF). Residues 194 to 198 (NKFWG) are Extracellular-facing. The chain crosses the membrane as a helical span at residues 199-223 (TILFTTCFFTPGSIMVGIYGKIFIV). Residues 224 to 256 (SRRHARALGNMPENTKGAGRNLSKKKDRKAAKT) lie on the Cytoplasmic side of the membrane. A helical membrane pass occupies residues 257–277 (LGIVMGVFLACWLPCFLAVLI). Residues 278-286 (DPYLDYSTP) are Extracellular-facing. Residues 287 to 307 (IIVLDLLVWLGYFNSTCNPLI) form a helical membrane-spanning segment. Residues 308 to 342 (HGFFYPWFRKALEHIVSGKIFRSNSDTANLFPEAH) lie on the Cytoplasmic side of the membrane.

This sequence belongs to the G-protein coupled receptor 1 family.

The protein localises to the cell membrane. Its function is as follows. Olfactory receptor activated by several primary trace amines, including isoamylamine. Activated by isoamylamine and cyclohexylamine, but not to the corresponding alcohols, isoamylalcohol and cyclohexanol. This receptor is probably mediated by the G(s)-class of G-proteins which activate adenylate cyclase. In Rattus norvegicus (Rat), this protein is Trace amine-associated receptor 3 (Taar3).